Consider the following 70-residue polypeptide: Putative membrane protein insertion efficiency factor (70 aa).

It belongs to the UPF0161 family.

It is found in the cell membrane. In terms of biological role, could be involved in insertion of integral membrane proteins into the membrane. In Moorella thermoacetica (strain ATCC 39073 / JCM 9320), this protein is Putative membrane protein insertion efficiency factor.